A 325-amino-acid chain; its full sequence is Peroxidase RIP1 (325 aa).

A signal peptide spans 1 to 21 (MASSSPCQIFLVFVMVTLVTS). Cystine bridges form between Cys38/Cys118, Cys71/Cys76, Cys125/Cys321, and Cys206/Cys231. Catalysis depends on His69, which acts as the Proton acceptor. Ca(2+)-binding residues include Asp70, Val73, Gly75, Asp77, and Ser79. A glycan (N-linked (GlcNAc...) asparagine) is linked at Asn87. Pro169 contributes to the substrate binding site. Residue Asn174 is glycosylated (N-linked (GlcNAc...) asparagine). His199 contacts heme b. Ca(2+) is bound at residue Thr200. Asn215 carries N-linked (GlcNAc...) asparagine glycosylation. Asp244, Thr246, and Glu251 together coordinate Ca(2+).

This sequence belongs to the peroxidase family. Classical plant (class III) peroxidase subfamily. Heme b is required as a cofactor. Ca(2+) serves as cofactor. As to expression, expressed in the differentiating root epidermis following inoculation with the bacterial symbiont Sinorhizobium meliloti.

It is found in the secreted. The enzyme catalyses 2 a phenolic donor + H2O2 = 2 a phenolic radical donor + 2 H2O. Functionally, removal of H(2)O(2), oxidation of toxic reductants, biosynthesis and degradation of lignin, suberization, auxin catabolism, response to environmental stresses such as wounding, pathogen attack and oxidative stress. These functions might be dependent on each isozyme/isoform in each plant tissue. The polypeptide is Peroxidase RIP1 (Medicago truncatula (Barrel medic)).